Consider the following 478-residue polypeptide: Cytochrome c-552 (478 aa).

An N-terminal signal peptide occupies residues 1–27; that stretch reads MKKQWTRRSAAAIAMVTTLLLSSHSFA. A heme c-binding site is contributed by His-91. Heme-binding residues include Cys-119, Cys-122, and Lys-123. Cys-157, Cys-160, His-161, Cys-206, Cys-209, and His-210 together coordinate heme c. Ca(2+) is bound by residues Glu-212, Tyr-213, Lys-258, and Gln-260. Substrate is bound at residue Tyr-213. Substrate is bound at residue His-261. Residues His-272, Cys-279, Cys-282, His-283, His-298, Cys-311, Cys-314, His-315, and His-390 each coordinate heme c.

This sequence belongs to the cytochrome c-552 family. Ca(2+) serves as cofactor. The cofactor is heme c.

The protein resides in the periplasm. It catalyses the reaction 6 Fe(III)-[cytochrome c] + NH4(+) + 2 H2O = 6 Fe(II)-[cytochrome c] + nitrite + 8 H(+). Its pathway is nitrogen metabolism; nitrate reduction (assimilation). Catalyzes the reduction of nitrite to ammonia, consuming six electrons in the process. In Aliivibrio fischeri (strain ATCC 700601 / ES114) (Vibrio fischeri), this protein is Cytochrome c-552.